A 630-amino-acid chain; its full sequence is uncharacterized protein (630 aa).

A run of 2 helical transmembrane segments spans residues L8–V28 and V258–I278. Positions E399–S426 are disordered. Residues P404–P417 show a composition bias toward polar residues.

It belongs to the peptidase S1C family.

The protein localises to the cell membrane. This is an uncharacterized protein from Sinorhizobium fredii (strain NBRC 101917 / NGR234).